The following is a 177-amino-acid chain: O-acetyl-ADP-ribose deacetylase (177 aa).

Positions 1-175 (MKTRIHVVQG…LYERLLTQQG (175 aa)) constitute a Macro domain. Substrate is bound by residues 11-12 (DI), N25, 33-35 (GVD), and 122-126 (STGVY). The active-site Proton acceptor is D35.

This sequence belongs to the MacroD-type family. YmdB subfamily. Homodimer. Interacts with RNase III.

The enzyme catalyses 3''-O-acetyl-ADP-D-ribose + H2O = ADP-D-ribose + acetate + H(+). It catalyses the reaction 2''-O-acetyl-ADP-D-ribose + H2O = ADP-D-ribose + acetate + H(+). Deacetylates O-acetyl-ADP ribose to yield ADP-ribose and free acetate. Down-regulates ribonuclease 3 (RNase III) activity. Acts by interacting directly with the region of the ribonuclease that is required for dimerization/activation. In Escherichia coli O157:H7, this protein is O-acetyl-ADP-ribose deacetylase.